Here is a 595-residue protein sequence, read N- to C-terminus: Aspartate--tRNA(Asp/Asn) ligase (595 aa).

E178 provides a ligand contact to L-aspartate. The interval 202-205 (QLFK) is aspartate. Position 224 (R224) interacts with L-aspartate. ATP-binding positions include 224-226 (RDE) and Q233. H458 provides a ligand contact to L-aspartate. E488 lines the ATP pocket. An L-aspartate-binding site is contributed by R495. Position 540-543 (540-543 (GLDR)) interacts with ATP.

It belongs to the class-II aminoacyl-tRNA synthetase family. Type 1 subfamily. Homodimer.

The protein resides in the cytoplasm. The catalysed reaction is tRNA(Asx) + L-aspartate + ATP = L-aspartyl-tRNA(Asx) + AMP + diphosphate. Its function is as follows. Aspartyl-tRNA synthetase with relaxed tRNA specificity since it is able to aspartylate not only its cognate tRNA(Asp) but also tRNA(Asn). Reaction proceeds in two steps: L-aspartate is first activated by ATP to form Asp-AMP and then transferred to the acceptor end of tRNA(Asp/Asn). The sequence is that of Aspartate--tRNA(Asp/Asn) ligase from Trichodesmium erythraeum (strain IMS101).